The following is a 224-amino-acid chain: Holliday junction branch migration complex subunit RuvA (224 aa).

The tract at residues 1–64 (MIGRLSGVLV…EDLLQLYGFP (64 aa)) is domain I. The tract at residues 65–143 (TLLEKEWHRL…EVMAMGGTLE (79 aa)) is domain II. The segment at 144 to 171 (AALDGVIEDGMAASEGIEPPSAARPAVP) is flexible linker. The domain III stretch occupies residues 172 to 224 (SAASDQAGALSALVNLGYGQGEAASAVATAAGEGAVGETDIIRAALRLLAPKG).

The protein belongs to the RuvA family. Homotetramer. Forms an RuvA(8)-RuvB(12)-Holliday junction (HJ) complex. HJ DNA is sandwiched between 2 RuvA tetramers; dsDNA enters through RuvA and exits via RuvB. An RuvB hexamer assembles on each DNA strand where it exits the tetramer. Each RuvB hexamer is contacted by two RuvA subunits (via domain III) on 2 adjacent RuvB subunits; this complex drives branch migration. In the full resolvosome a probable DNA-RuvA(4)-RuvB(12)-RuvC(2) complex forms which resolves the HJ.

The protein resides in the cytoplasm. The RuvA-RuvB-RuvC complex processes Holliday junction (HJ) DNA during genetic recombination and DNA repair, while the RuvA-RuvB complex plays an important role in the rescue of blocked DNA replication forks via replication fork reversal (RFR). RuvA specifically binds to HJ cruciform DNA, conferring on it an open structure. The RuvB hexamer acts as an ATP-dependent pump, pulling dsDNA into and through the RuvAB complex. HJ branch migration allows RuvC to scan DNA until it finds its consensus sequence, where it cleaves and resolves the cruciform DNA. This is Holliday junction branch migration complex subunit RuvA from Dinoroseobacter shibae (strain DSM 16493 / NCIMB 14021 / DFL 12).